The chain runs to 225 residues: Ribosome maturation factor RimM (225 aa).

The PRC barrel domain maps to 144–225 (ADEFYWVDLI…RIVVDWEADY (82 aa)).

It belongs to the RimM family. As to quaternary structure, binds ribosomal protein uS19.

The protein localises to the cytoplasm. In terms of biological role, an accessory protein needed during the final step in the assembly of 30S ribosomal subunit, possibly for assembly of the head region. Essential for efficient processing of 16S rRNA. May be needed both before and after RbfA during the maturation of 16S rRNA. It has affinity for free ribosomal 30S subunits but not for 70S ribosomes. The sequence is that of Ribosome maturation factor RimM from Burkholderia vietnamiensis (strain G4 / LMG 22486) (Burkholderia cepacia (strain R1808)).